The primary structure comprises 725 residues: Catalase B (725 aa).

A signal peptide spans 1 to 15 (MRALSLASLIGIASA). Positions 16–27 (ACPYMTGELERR) are excised as a propeptide. N50 is a glycosylation site (N-linked (GlcNAc...) asparagine). H101 is an active-site residue. N-linked (GlcNAc...) asparagine glycosylation is present at N119. N174 is an active-site residue. Y388 is a heme binding site. 3 N-linked (GlcNAc...) asparagine glycosylation sites follow: N447, N550, and N645.

Belongs to the catalase family. In terms of assembly, homotetramer. Requires heme as cofactor.

The protein resides in the secreted. The enzyme catalyses 2 H2O2 = O2 + 2 H2O. Occurs in almost all aerobically respiring organisms and serves to protect cells from the toxic effects of hydrogen peroxide through its degradation into water and oxygen. The sequence is that of Catalase B (catB) from Aspergillus oryzae (strain ATCC 42149 / RIB 40) (Yellow koji mold).